The primary structure comprises 390 residues: Uroporphyrinogen decarboxylase 2, chloroplastic (390 aa).

The transit peptide at 1–30 (MATACPPLSLQPAYLSGRSARARRPPPAVR) directs the protein to the chloroplast. Substrate is bound by residues 70-74 (RQAGR), Phe89, Ser119, Asp120, Tyr197, Ser252, and His367.

This sequence belongs to the uroporphyrinogen decarboxylase family. As to quaternary structure, homodimer.

The protein localises to the plastid. The protein resides in the chloroplast. It carries out the reaction uroporphyrinogen III + 4 H(+) = coproporphyrinogen III + 4 CO2. It participates in porphyrin-containing compound metabolism; protoporphyrin-IX biosynthesis; coproporphyrinogen-III from 5-aminolevulinate: step 4/4. Functionally, catalyzes the decarboxylation of four acetate groups of uroporphyrinogen-III to yield coproporphyrinogen-III. This chain is Uroporphyrinogen decarboxylase 2, chloroplastic, found in Oryza sativa subsp. japonica (Rice).